The primary structure comprises 290 residues: N-acetylmannosamine kinase (290 aa).

ATP-binding positions include 5-12 (AIDIGGTK) and 132-139 (GVGGGVVS). Zn(2+)-binding residues include H156, C166, C168, and C173.

It belongs to the ROK (NagC/XylR) family. NanK subfamily. In terms of assembly, homodimer.

The enzyme catalyses an N-acyl-D-mannosamine + ATP = an N-acyl-D-mannosamine 6-phosphate + ADP + H(+). It functions in the pathway amino-sugar metabolism; N-acetylneuraminate degradation; D-fructose 6-phosphate from N-acetylneuraminate: step 2/5. Functionally, catalyzes the phosphorylation of N-acetylmannosamine (ManNAc) to ManNAc-6-P. In Citrobacter koseri (strain ATCC BAA-895 / CDC 4225-83 / SGSC4696), this protein is N-acetylmannosamine kinase.